A 371-amino-acid chain; its full sequence is Sensor histidine kinase YvfT (371 aa).

Residues 1 to 10 are Extracellular-facing; sequence MKKAISIFPK. The chain crosses the membrane as a helical span at residues 11–31; that stretch reads EFGFFPYIFLVYTIMPFLSLL. Topologically, residues 32–38 are cytoplasmic; sequence KESGVKQ. The chain crosses the membrane as a helical span at residues 39 to 59; it reads GIGYGMLLLFVAAYRQLFCSV. The Extracellular portion of the chain corresponds to 60 to 71; sequence GKASFTYWLIVQ. The helical transmembrane segment at 72-92 threads the bilayer; the sequence is MAVILMYSVFYNITYIYLGFF. Over 93-109 the chain is Cytoplasmic; the sequence is PANFVGYYKEKTNFNRA. The helical transmembrane segment at 110-130 threads the bilayer; the sequence is FCALIFILLFPCLYQFIANSV. At 131–135 the chain is on the extracellular side; that stretch reads SLREL. The chain crosses the membrane as a helical span at residues 136–156; the sequence is FSVLPFLVIMLISPFGIRSMF. Residues 157–371 are Cytoplasmic-facing; it reads RRIELEAKLA…LTIPLIKKAE (215 aa). One can recognise a Histidine kinase domain in the interval 187–368; the sequence is DLHDTLGHTL…VVALTIPLIK (182 aa). Position 189 is a phosphohistidine; by autocatalysis (His189).

The protein resides in the cell membrane. The catalysed reaction is ATP + protein L-histidine = ADP + protein N-phospho-L-histidine.. In terms of biological role, member of the two-component regulatory system YvfT/YvfU. Probably activates YvfU by phosphorylation. The polypeptide is Sensor histidine kinase YvfT (yvfT) (Bacillus subtilis (strain 168)).